A 67-amino-acid polypeptide reads, in one-letter code: Large ribosomal subunit protein uL29 (67 aa).

It belongs to the universal ribosomal protein uL29 family.

The protein is Large ribosomal subunit protein uL29 of Alkaliphilus oremlandii (strain OhILAs) (Clostridium oremlandii (strain OhILAs)).